Reading from the N-terminus, the 269-residue chain is Tryptophan synthase alpha chain (269 aa).

Active-site proton acceptor residues include glutamate 41 and aspartate 52.

The protein belongs to the TrpA family. As to quaternary structure, tetramer of two alpha and two beta chains.

It carries out the reaction (1S,2R)-1-C-(indol-3-yl)glycerol 3-phosphate + L-serine = D-glyceraldehyde 3-phosphate + L-tryptophan + H2O. It functions in the pathway amino-acid biosynthesis; L-tryptophan biosynthesis; L-tryptophan from chorismate: step 5/5. The alpha subunit is responsible for the aldol cleavage of indoleglycerol phosphate to indole and glyceraldehyde 3-phosphate. The protein is Tryptophan synthase alpha chain of Geobacillus stearothermophilus (Bacillus stearothermophilus).